Here is a 719-residue protein sequence, read N- to C-terminus: Polyphosphate kinase (719 aa).

Position 47 (Asn47) interacts with ATP. Positions 377 and 407 each coordinate Mg(2+). The active-site Phosphohistidine intermediate is the His437. ATP contacts are provided by Tyr470, Arg566, and His594.

It belongs to the polyphosphate kinase 1 (PPK1) family. Mg(2+) is required as a cofactor. An intermediate of this reaction is the autophosphorylated ppk in which a phosphate is covalently linked to a histidine residue through a N-P bond.

It catalyses the reaction [phosphate](n) + ATP = [phosphate](n+1) + ADP. Catalyzes the reversible transfer of the terminal phosphate of ATP to form a long-chain polyphosphate (polyP). In Exiguobacterium sibiricum (strain DSM 17290 / CCUG 55495 / CIP 109462 / JCM 13490 / 255-15), this protein is Polyphosphate kinase.